Consider the following 964-residue polypeptide: Protein translocase subunit SecA (964 aa).

ATP contacts are provided by residues Gln-86, 104 to 108, and Asp-494; that span reads GEGKT. The tract at residues 848–964 is disordered; that stretch reads AESADTIAVA…YKMCHGQNEK (117 aa). Acidic residues predominate over residues 871-882; the sequence is AEGEVEEEDEDT. Over residues 889-900 the composition is skewed to low complexity; the sequence is AESAAASGAGES. Zn(2+) is bound by residues Cys-947, Cys-949, Cys-958, and His-959.

This sequence belongs to the SecA family. Monomer and homodimer. Part of the essential Sec protein translocation apparatus which comprises SecA, SecYEG and auxiliary proteins SecDF. Other proteins may also be involved. Requires Zn(2+) as cofactor.

It is found in the cell membrane. The protein resides in the cytoplasm. The enzyme catalyses ATP + H2O + cellular proteinSide 1 = ADP + phosphate + cellular proteinSide 2.. Part of the Sec protein translocase complex. Interacts with the SecYEG preprotein conducting channel. Has a central role in coupling the hydrolysis of ATP to the transfer of proteins into and across the cell membrane, serving as an ATP-driven molecular motor driving the stepwise translocation of polypeptide chains across the membrane. The chain is Protein translocase subunit SecA from Bifidobacterium longum (strain NCC 2705).